Here is a 1590-residue protein sequence, read N- to C-terminus: Pentafunctional AROM polypeptide (1590 aa).

The tract at residues 1–387 is 3-dehydroquinate synthase; that stretch reads MGSTTFENPT…YEPKASVVED (387 aa). Residues 49-51, 86-89, 117-119, and Asp-122 contribute to the NAD(+) site; these read DTN, ENSK, and GGV. 7-phospho-2-dehydro-3-deoxy-D-arabino-heptonate is bound at residue Arg-133. 142-143 is an NAD(+) binding site; the sequence is TT. Positions 149 and 155 each coordinate 7-phospho-2-dehydro-3-deoxy-D-arabino-heptonate. Residue Lys-164 participates in NAD(+) binding. Asn-165 is a binding site for 7-phospho-2-dehydro-3-deoxy-D-arabino-heptonate. NAD(+) is bound by residues 182–185 and Asn-193; that span reads FLET. Glu-197 contacts Zn(2+). 7-phospho-2-dehydro-3-deoxy-D-arabino-heptonate-binding positions include 197–200 and Lys-253; that span reads EVVK. Residue Glu-263 is the Proton acceptor; for 3-dehydroquinate synthase activity of the active site. 7-phospho-2-dehydro-3-deoxy-D-arabino-heptonate-binding positions include 267–271 and His-274; that span reads RNILN. Position 274 (His-274) interacts with Zn(2+). His-278 functions as the Proton acceptor; for 3-dehydroquinate synthase activity in the catalytic mechanism. 7-phospho-2-dehydro-3-deoxy-D-arabino-heptonate contacts are provided by His-290 and Lys-359. His-290 is a binding site for Zn(2+). The EPSP synthase stretch occupies residues 400 to 841; that stretch reads VRPSVPETLN…WDILSKSFQV (442 aa). Cys-823 functions as the For EPSP synthase activity in the catalytic mechanism. A shikimate kinase region spans residues 863–1055; sequence DKSIFIIGMR…RNKPQSFFVS (193 aa). ATP is bound at residue 870-877; sequence GMRGAGKT. The tract at residues 1056–1276 is 3-dehydroquinase; it reads LTMPDISGAA…AAPGQLSAAE (221 aa). His-1179 acts as the Proton acceptor; for 3-dehydroquinate dehydratase activity in catalysis. Lys-1207 functions as the Schiff-base intermediate with substrate; for 3-dehydroquinate dehydratase activity in the catalytic mechanism. The shikimate dehydrogenase stretch occupies residues 1289–1590; it reads PKSFYLFGTP…KMDKHPTFVC (302 aa).

In the N-terminal section; belongs to the sugar phosphate cyclases superfamily. Dehydroquinate synthase family. This sequence in the 2nd section; belongs to the EPSP synthase family. The protein in the 3rd section; belongs to the shikimate kinase family. It in the 4th section; belongs to the type-I 3-dehydroquinase family. In the C-terminal section; belongs to the shikimate dehydrogenase family. Homodimer. The cofactor is Zn(2+).

Its subcellular location is the cytoplasm. It catalyses the reaction 7-phospho-2-dehydro-3-deoxy-D-arabino-heptonate = 3-dehydroquinate + phosphate. The catalysed reaction is 3-dehydroquinate = 3-dehydroshikimate + H2O. It carries out the reaction shikimate + NADP(+) = 3-dehydroshikimate + NADPH + H(+). The enzyme catalyses shikimate + ATP = 3-phosphoshikimate + ADP + H(+). It catalyses the reaction 3-phosphoshikimate + phosphoenolpyruvate = 5-O-(1-carboxyvinyl)-3-phosphoshikimate + phosphate. It functions in the pathway metabolic intermediate biosynthesis; chorismate biosynthesis; chorismate from D-erythrose 4-phosphate and phosphoenolpyruvate: step 2/7. Its pathway is metabolic intermediate biosynthesis; chorismate biosynthesis; chorismate from D-erythrose 4-phosphate and phosphoenolpyruvate: step 3/7. It participates in metabolic intermediate biosynthesis; chorismate biosynthesis; chorismate from D-erythrose 4-phosphate and phosphoenolpyruvate: step 4/7. The protein operates within metabolic intermediate biosynthesis; chorismate biosynthesis; chorismate from D-erythrose 4-phosphate and phosphoenolpyruvate: step 5/7. It functions in the pathway metabolic intermediate biosynthesis; chorismate biosynthesis; chorismate from D-erythrose 4-phosphate and phosphoenolpyruvate: step 6/7. In terms of biological role, the AROM polypeptide catalyzes 5 consecutive enzymatic reactions in prechorismate polyaromatic amino acid biosynthesis. This is Pentafunctional AROM polypeptide from Sclerotinia sclerotiorum (White mold).